Here is an 832-residue protein sequence, read N- to C-terminus: Protein monoglycylase TTLL8 (832 aa).

Pro residues predominate over residues 1 to 13; sequence MSCPPTPNPPFRP. Disordered regions lie at residues 1–84 and 277–304; these read MSCP…QDLS and GKSK…KLPS. Composition is skewed to basic and acidic residues over residues 46–59, 66–75, and 280–299; these read QLRE…ERKK, DGDHKEENKL, and KKEE…ENPD. One can recognise a TTL domain in the interval 271–624; it reads YCSKVKGKSK…RKLDRNCDIG (354 aa). Residues K397, 403–404, 435–438, 448–450, and 492–493 each bind ATP; these read RG, QKYI, KFD, and CN. R403 contributes to the a protein binding site. L-glutamate is bound at residue S495. The Mg(2+) site is built by D570, E583, and N585. E583 contacts ATP.

Mg(2+) serves as cofactor. As to expression, highly expressed in testis. Expressed in brain, heart, kidney, liver, lung, muscle, spleen and trachea. Expressed in sperm flagellum. In the brain, specifically expressed in ependymal cilia.

It localises to the cytoplasm. The protein localises to the cytoskeleton. The protein resides in the cell projection. Its subcellular location is the cilium. It is found in the cilium axoneme. It localises to the flagellum axoneme. It carries out the reaction L-glutamyl-[protein] + glycine + ATP = glycyl-L-glutamyl-[protein] + ADP + phosphate + H(+). In terms of biological role, monoglycylase which modifies both tubulin and non-tubulin proteins, adding a single glycine on the gamma-carboxyl groups of specific glutamate residues to generate monoglycine side chains within the C-terminal tail of target proteins. Not involved in elongation step of the polyglycylation reaction. Preferentially monoglycylates alpha-tubulin over beta-tubulin. Together with TTLL3, mediates microtubule glycylation of primary and motile cilia, which is essential for their stability and maintenance. Together with TTLL3, glycylates sperm flagella which regulates axonemal dynein motor activity, thereby controlling flagellar beat, directional sperm swimming and male fertility. Monoglycylates non-tubulin proteins such as ANP32A, ANP32B, SET, NCL and NAP1. The protein is Protein monoglycylase TTLL8 of Mus musculus (Mouse).